An 81-amino-acid chain; its full sequence is MRLFLSLLVVVLSIVLEGPTPAQGVPDVSNSFDVLEGFGKTLEDNVREFINLITQSELPAKTRDWFSETFRKVKEKLKINS.

A signal peptide spans 1–24 (MRLFLSLLVVVLSIVLEGPTPAQG).

Belongs to the apolipoprotein C1 family.

It localises to the secreted. In Theropithecus gelada (Gelada baboon), this protein is Apolipoprotein C-I, acidic form (APOC1A).